A 225-amino-acid polypeptide reads, in one-letter code: 7-cyano-7-deazaguanine synthase (225 aa).

7-17 (LSGGMDSTTLL) is an ATP binding site. Zn(2+) contacts are provided by Cys-183, Cys-191, Cys-194, and Cys-197.

This sequence belongs to the QueC family. Homodimer. Requires Zn(2+) as cofactor.

It carries out the reaction 7-carboxy-7-deazaguanine + NH4(+) + ATP = 7-cyano-7-deazaguanine + ADP + phosphate + H2O + H(+). The protein operates within purine metabolism; 7-cyano-7-deazaguanine biosynthesis. In terms of biological role, catalyzes the ATP-dependent conversion of 7-carboxy-7-deazaguanine (CDG) to 7-cyano-7-deazaguanine (preQ(0)). This is 7-cyano-7-deazaguanine synthase from Caldicellulosiruptor saccharolyticus (strain ATCC 43494 / DSM 8903 / Tp8T 6331).